The primary structure comprises 156 residues: ATP synthase subunit b (156 aa).

A helical transmembrane segment spans residues alanine 11–alanine 31.

Belongs to the ATPase B chain family. F-type ATPases have 2 components, F(1) - the catalytic core - and F(0) - the membrane proton channel. F(1) has five subunits: alpha(3), beta(3), gamma(1), delta(1), epsilon(1). F(0) has three main subunits: a(1), b(2) and c(10-14). The alpha and beta chains form an alternating ring which encloses part of the gamma chain. F(1) is attached to F(0) by a central stalk formed by the gamma and epsilon chains, while a peripheral stalk is formed by the delta and b chains.

The protein localises to the cell inner membrane. In terms of biological role, f(1)F(0) ATP synthase produces ATP from ADP in the presence of a proton or sodium gradient. F-type ATPases consist of two structural domains, F(1) containing the extramembraneous catalytic core and F(0) containing the membrane proton channel, linked together by a central stalk and a peripheral stalk. During catalysis, ATP synthesis in the catalytic domain of F(1) is coupled via a rotary mechanism of the central stalk subunits to proton translocation. Functionally, component of the F(0) channel, it forms part of the peripheral stalk, linking F(1) to F(0). In Citrobacter koseri (strain ATCC BAA-895 / CDC 4225-83 / SGSC4696), this protein is ATP synthase subunit b.